Reading from the N-terminus, the 64-residue chain is U-scoloptoxin(14)-Er1a (64 aa).

The N-terminal stretch at 1-23 (MRPSFPLLLIMLLVCTAHHMVSG) is a signal peptide.

The protein belongs to the scoloptoxin-14 family. In terms of processing, contains 4 disulfide bonds. Expressed by the venom gland.

The protein localises to the secreted. The protein is U-scoloptoxin(14)-Er1a of Ethmostigmus rubripes (Giant centipede).